Consider the following 186-residue polypeptide: Transposons Tn1721 resolvase (186 aa).

The Resolvase/invertase-type recombinase catalytic domain occupies 4 to 137 (HRIGYVRVSS…EGIALAKQRG (134 aa)). The active-site O-(5'-phospho-DNA)-serine intermediate is S12. Positions 164–183 (KAQLAREFNISRETLYQYLR) form a DNA-binding region, H-T-H motif.

This sequence belongs to the site-specific recombinase resolvase family.

Functionally, resolvase catalyzes the resolution (a site-specific recombination) of the cointegrated replicon to yield the final transposition products. This is Transposons Tn1721 resolvase (tnpR) from Escherichia coli.